The sequence spans 86 residues: Large ribosomal subunit protein uL24c (86 aa).

Belongs to the universal ribosomal protein uL24 family. As to quaternary structure, part of the 50S ribosomal subunit.

Its subcellular location is the plastid. The protein localises to the chloroplast. Its function is as follows. One of two assembly initiator proteins, it binds directly to the 5'-end of the 23S rRNA, where it nucleates assembly of the 50S subunit. In Heterosigma akashiwo (strain NIES-293 / 8280G21-1), this protein is Large ribosomal subunit protein uL24c (rpl24).